The primary structure comprises 137 residues: Large ribosomal subunit protein uL16 (137 aa).

The protein belongs to the universal ribosomal protein uL16 family. As to quaternary structure, part of the 50S ribosomal subunit.

Its function is as follows. Binds 23S rRNA and is also seen to make contacts with the A and possibly P site tRNAs. This chain is Large ribosomal subunit protein uL16, found in Rhodopseudomonas palustris (strain BisB5).